The sequence spans 370 residues: Queuine tRNA-ribosyltransferase (370 aa).

The active-site Proton acceptor is D93. Residues 93 to 97 (DSGGF), D147, Q189, and G216 each bind substrate. The segment at 247-253 (GVGSPDC) is RNA binding. The active-site Nucleophile is D266. Residues 271–275 (TRIAR) form an RNA binding; important for wobble base 34 recognition region. Residues C304, C306, C309, and H335 each coordinate Zn(2+).

This sequence belongs to the queuine tRNA-ribosyltransferase family. Homodimer. Within each dimer, one monomer is responsible for RNA recognition and catalysis, while the other monomer binds to the replacement base PreQ1. The cofactor is Zn(2+).

The enzyme catalyses 7-aminomethyl-7-carbaguanine + guanosine(34) in tRNA = 7-aminomethyl-7-carbaguanosine(34) in tRNA + guanine. Its pathway is tRNA modification; tRNA-queuosine biosynthesis. Its function is as follows. Catalyzes the base-exchange of a guanine (G) residue with the queuine precursor 7-aminomethyl-7-deazaguanine (PreQ1) at position 34 (anticodon wobble position) in tRNAs with GU(N) anticodons (tRNA-Asp, -Asn, -His and -Tyr). Catalysis occurs through a double-displacement mechanism. The nucleophile active site attacks the C1' of nucleotide 34 to detach the guanine base from the RNA, forming a covalent enzyme-RNA intermediate. The proton acceptor active site deprotonates the incoming PreQ1, allowing a nucleophilic attack on the C1' of the ribose to form the product. After dissociation, two additional enzymatic reactions on the tRNA convert PreQ1 to queuine (Q), resulting in the hypermodified nucleoside queuosine (7-(((4,5-cis-dihydroxy-2-cyclopenten-1-yl)amino)methyl)-7-deazaguanosine). The protein is Queuine tRNA-ribosyltransferase of Pelotomaculum thermopropionicum (strain DSM 13744 / JCM 10971 / SI).